Reading from the N-terminus, the 287-residue chain is Xyloglucan endotransglucosylase protein 1 (287 aa).

The first 28 residues, 1–28 (MAFMSFINGFSTLFLVALLASSMMAAKG), serve as a signal peptide directing secretion. A GH16 domain is found at 29–219 (GNFYQDFDVT…WTKAPFTAYY (191 aa)). Catalysis depends on Glu-105, which acts as the Nucleophile. Catalysis depends on Glu-109, which acts as the Proton donor. Glu-109 is a xyloglucan binding site. Asn-113 carries an N-linked (GlcNAc...) asparagine glycan. Xyloglucan is bound by residues 122 to 124 (HTN), 132 to 134 (NRE), 198 to 199 (DW), and Gly-203. Intrachain disulfides connect Cys-227–Cys-231 and Cys-266–Cys-280. Xyloglucan is bound at residue Arg-271.

Belongs to the glycosyl hydrolase 16 family. XTH group 2 subfamily. Contains at least one intrachain disulfide bond essential for its enzymatic activity. As to expression, expressed in fruit pulp. Expressed in leaves, flowers, calyces, stems and fruits. Highest expression in leaves and lowest in fruits.

It is found in the secreted. The protein resides in the cell wall. It localises to the extracellular space. The protein localises to the apoplast. The enzyme catalyses breaks a beta-(1-&gt;4) bond in the backbone of a xyloglucan and transfers the xyloglucanyl segment on to O-4 of the non-reducing terminal glucose residue of an acceptor, which can be a xyloglucan or an oligosaccharide of xyloglucan.. Its function is as follows. Catalyzes xyloglucan endotransglycosylation (XET). Cleaves and religates xyloglucan polymers. Does not catalyze xyloglucan endohydrolysis (XEH). Overexpression in Arabidopsis transgenic plants results in elevated tolerance to abiotic stress, such as salt, ABA (abscisic acid) and drought stresses, and in the production of wider leaves. Overexpression in transgenic tomato plants slows down fruit ripening and softening, and the plants produce larger fruits. Both transgenic plants have larger and more irregular cells. Moreover, the fruits of the transgenic tomato have higher density of cell wall and intercellular spaces. May provide cells with more strength and thickness to maintain structural integrity. Probably involved in cell wall assembly and synthesis in fast growing tissues and in the maintenance of firmness in mature fruits. This chain is Xyloglucan endotransglucosylase protein 1, found in Diospyros kaki (Kaki persimmon).